A 60-amino-acid polypeptide reads, in one-letter code: Large ribosomal subunit protein bL32 (60 aa).

Belongs to the bacterial ribosomal protein bL32 family.

The chain is Large ribosomal subunit protein bL32 from Oenococcus oeni (strain ATCC BAA-331 / PSU-1).